Reading from the N-terminus, the 350-residue chain is Secreted effector protein PipB2 (350 aa).

Pentapeptide repeat domains lie at 162 to 201 (ANLT…NLSG), 202 to 241 (ASLG…SLLG), 247 to 286 (CNCS…IMEG), and 287 to 326 (AVLT…TLTD).

Interacts with the host kinesin light chain (KLC), a subunit of the kinesin-1 motor complex.

The protein localises to the secreted. The protein resides in the host membrane. Its function is as follows. Effector proteins function to alter host cell physiology and promote bacterial survival in host tissues. Involved in the reorganization of late endosome/lysosome (LE/Lys) compartments in mammalian cells. Necessary and sufficient to link kinesin-1 onto the Salmonella-containing vacuole (SCV) membrane. Required for centrifugal extension of lysosomal glycoprotein-rich membrane tubules, known as Salmonella-induced filaments (Sifs), away from the SCV and toward the cell periphery. Required for virulence, but not for intracellular survival and replication in phagocytic cells. This chain is Secreted effector protein PipB2 (pipB2), found in Salmonella typhi.